The chain runs to 295 residues: 4-hydroxy-tetrahydrodipicolinate synthase (295 aa).

Thr45 serves as a coordination point for pyruvate. Catalysis depends on Tyr131, which acts as the Proton donor/acceptor. Lys159 acts as the Schiff-base intermediate with substrate in catalysis. Val202 lines the pyruvate pocket.

The protein belongs to the DapA family. Homotetramer; dimer of dimers.

It is found in the cytoplasm. It catalyses the reaction L-aspartate 4-semialdehyde + pyruvate = (2S,4S)-4-hydroxy-2,3,4,5-tetrahydrodipicolinate + H2O + H(+). It participates in amino-acid biosynthesis; L-lysine biosynthesis via DAP pathway; (S)-tetrahydrodipicolinate from L-aspartate: step 3/4. In terms of biological role, catalyzes the condensation of (S)-aspartate-beta-semialdehyde [(S)-ASA] and pyruvate to 4-hydroxy-tetrahydrodipicolinate (HTPA). This is 4-hydroxy-tetrahydrodipicolinate synthase from Methanothrix thermoacetophila (strain DSM 6194 / JCM 14653 / NBRC 101360 / PT) (Methanosaeta thermophila).